We begin with the raw amino-acid sequence, 543 residues long: uncharacterized protein (543 aa).

Residues 1-59 (MLKKNDIVEVEIVDLTHEGAGVAKVDGLVFFVENALPSEKILMRVLKVNKKIGFGKVEK) form the TRAM domain. Residues Gln-283, Tyr-312, Glu-333, and Asp-381 each contribute to the S-adenosyl-L-methionine site. Catalysis depends on Cys-408, which acts as the Nucleophile.

It belongs to the class I-like SAM-binding methyltransferase superfamily. RNA M5U methyltransferase family.

This is an uncharacterized protein from Streptococcus pneumoniae (strain ATCC BAA-255 / R6).